A 575-amino-acid chain; its full sequence is Carboxylesterase 5A (575 aa).

A signal peptide spans 1 to 28; the sequence is MSGDWVRPGQALIWVIWIFGAIIEGSVT. Cysteine 94 and cysteine 121 are oxidised to a cystine. N-linked (GlcNAc...) asparagine glycosylation occurs at asparagine 134. Catalysis depends on serine 226, which acts as the Acyl-ester intermediate. A disulfide bridge connects residues cysteine 280 and cysteine 291. Asparagine 281 is a glycosylation site (N-linked (GlcNAc...) asparagine). Glutamate 345 serves as the catalytic Charge relay system. N-linked (GlcNAc...) asparagine glycosylation is present at asparagine 363. The Charge relay system role is filled by histidine 454. Residue asparagine 524 is glycosylated (N-linked (GlcNAc...) asparagine).

It belongs to the type-B carboxylesterase/lipase family. In terms of processing, N-glycosylated.

The protein localises to the secreted. It catalyses the reaction a carboxylic ester + H2O = an alcohol + a carboxylate + H(+). Its function is as follows. Involved in the detoxification of xenobiotics and in the activation of ester and amide prodrugs. In Mus musculus (Mouse), this protein is Carboxylesterase 5A (Ces5a).